The chain runs to 177 residues: Putative 3-methyladenine DNA glycosylase (177 aa).

This sequence belongs to the DNA glycosylase MPG family.

This chain is Putative 3-methyladenine DNA glycosylase, found in Rickettsia felis (strain ATCC VR-1525 / URRWXCal2) (Rickettsia azadi).